The sequence spans 184 residues: Large ribosomal subunit protein bL17 (184 aa).

The tract at residues 126-184 is disordered; the sequence is TRAARAAASKQTADEAQVEETPAEEVTEETAAEETTEAAQADEAPAEEAPVEEKKDEEK. Residues 141-161 are compositionally biased toward acidic residues; it reads AQVEETPAEEVTEETAAEETT.

This sequence belongs to the bacterial ribosomal protein bL17 family. As to quaternary structure, part of the 50S ribosomal subunit. Contacts protein L32.

The polypeptide is Large ribosomal subunit protein bL17 (Corynebacterium efficiens (strain DSM 44549 / YS-314 / AJ 12310 / JCM 11189 / NBRC 100395)).